The sequence spans 451 residues: tRNA-2-methylthio-N(6)-dimethylallyladenosine synthase (451 aa).

In terms of domain architecture, MTTase N-terminal spans 5-121; sequence RQYHITTFGC…LQDLLEQVEG (117 aa). Residues cysteine 14, cysteine 50, cysteine 84, cysteine 156, cysteine 160, and cysteine 163 each contribute to the [4Fe-4S] cluster site. The Radical SAM core domain maps to 142–379; that stretch reads RDSTVTAWVN…NHLVAQKAAE (238 aa). The 65-residue stretch at 382-446 folds into the TRAM domain; the sequence is QRYAGRIEEV…AFSLTGEAVE (65 aa).

The protein belongs to the methylthiotransferase family. MiaB subfamily. In terms of assembly, monomer. Requires [4Fe-4S] cluster as cofactor.

The protein localises to the cytoplasm. The enzyme catalyses N(6)-dimethylallyladenosine(37) in tRNA + (sulfur carrier)-SH + AH2 + 2 S-adenosyl-L-methionine = 2-methylsulfanyl-N(6)-dimethylallyladenosine(37) in tRNA + (sulfur carrier)-H + 5'-deoxyadenosine + L-methionine + A + S-adenosyl-L-homocysteine + 2 H(+). Functionally, catalyzes the methylthiolation of N6-(dimethylallyl)adenosine (i(6)A), leading to the formation of 2-methylthio-N6-(dimethylallyl)adenosine (ms(2)i(6)A) at position 37 in tRNAs that read codons beginning with uridine. The chain is tRNA-2-methylthio-N(6)-dimethylallyladenosine synthase from Picosynechococcus sp. (strain ATCC 27264 / PCC 7002 / PR-6) (Agmenellum quadruplicatum).